We begin with the raw amino-acid sequence, 803 residues long: Carbon monoxide dehydrogenase large chain (803 aa).

R384 is subject to 4-hydroxyarginine. Residue C385 coordinates Cu(+). Residue E757 participates in Mo-molybdopterin cytosine dinucleotide binding.

In terms of assembly, dimer of heterotrimers. Each heterotrimer consists of a large, a medium and a small subunit. Cu(+) serves as cofactor. It depends on Mo-molybdopterin cytosine dinucleotide as a cofactor.

It carries out the reaction CO + a quinone + H2O = a quinol + CO2. Its function is as follows. Catalyzes the oxidation of carbon monoxide to carbon dioxide. The chain is Carbon monoxide dehydrogenase large chain (cutL) from Hydrogenophaga pseudoflava (Pseudomonas carboxydoflava).